Consider the following 304-residue polypeptide: tRNA pseudouridine synthase B (304 aa).

Residue aspartate 40 is the Nucleophile of the active site.

This sequence belongs to the pseudouridine synthase TruB family. Type 1 subfamily.

The catalysed reaction is uridine(55) in tRNA = pseudouridine(55) in tRNA. Functionally, responsible for synthesis of pseudouridine from uracil-55 in the psi GC loop of transfer RNAs. This Halalkalibacterium halodurans (strain ATCC BAA-125 / DSM 18197 / FERM 7344 / JCM 9153 / C-125) (Bacillus halodurans) protein is tRNA pseudouridine synthase B.